We begin with the raw amino-acid sequence, 100 residues long: Integration host factor subunit alpha (100 aa).

Residues 53–72 (FDLRDKRQRPGRNPKTGEEI) form a disordered region.

Belongs to the bacterial histone-like protein family. As to quaternary structure, heterodimer of an alpha and a beta chain.

In terms of biological role, this protein is one of the two subunits of integration host factor, a specific DNA-binding protein that functions in genetic recombination as well as in transcriptional and translational control. This Pseudomonas putida (strain ATCC 700007 / DSM 6899 / JCM 31910 / BCRC 17059 / LMG 24140 / F1) protein is Integration host factor subunit alpha.